The following is a 739-amino-acid chain: Double-strand break repair protein mus-23 (739 aa).

Asp16, His18, Asp56, and Asn123 together coordinate Mn(2+). His124 functions as the Proton donor in the catalytic mechanism. The Mn(2+) site is built by His212, His240, and His242. Positions 516–739 (FDAGQHKQAQ…KPGLLARRLG (224 aa)) are disordered. Basic residues predominate over residues 523-532 (QAQRTKRFKR). A compositionally biased stretch (basic and acidic residues) spans 559–568 (VEPKGNDRPT). Positions 599–636 (KRGAAAKTTAAAKKAAPGKKAAPAKKAAPAKKAAPAKK) are enriched in low complexity. Residues 637–646 (APARGRKKKT) are compositionally biased toward basic residues. Acidic residues predominate over residues 650 to 686 (DSDEEEEEDYPEDDDEEEEEADEEEEDVIMEDDEEDP). Low complexity predominate over residues 694–722 (KATSRVASTRASARATPVRATPARATQAR).

Belongs to the MRE11/RAD32 family. As to quaternary structure, component of the MRN complex composed of two heterodimers RAD50 and MRE11 associated with a single NBS1. Mn(2+) is required as a cofactor.

It is found in the nucleus. The protein resides in the chromosome. It localises to the telomere. Core component of the MRN complex, which plays a central role in double-strand break (DSB) repair, DNA recombination, maintenance of telomere integrity and meiosis. The MRN complex is involved in the repair of DNA double-strand breaks (DSBs) via homologous recombination (HR), an error-free mechanism which primarily occurs during S and G2 phases. The complex (1) mediates the end resection of damaged DNA, which generates proper single-stranded DNA, a key initial steps in HR, and is (2) required for the recruitment of other repair factors and efficient activation of ATM and ATR upon DNA damage. Within the MRN complex, MRE11 possesses both single-strand endonuclease activity and double-strand-specific 3'-5' exonuclease activity. MRE11 first endonucleolytically cleaves the 5' strand at DNA DSB ends to prevent non-homologous end joining (NHEJ) and licence HR. It then generates a single-stranded DNA gap via 3' to 5' exonucleolytic degradation, which is required for single-strand invasion and recombination. The MRN complex is also required for the processing of R-loops. The chain is Double-strand break repair protein mus-23 (mus-23) from Neurospora crassa (strain ATCC 24698 / 74-OR23-1A / CBS 708.71 / DSM 1257 / FGSC 987).